Here is a 623-residue protein sequence, read N- to C-terminus: Glutathione import ATP-binding protein GsiA (623 aa).

ABC transporter domains lie at 15–269 (VSGL…QTLL) and 325–564 (LRSG…RKLM). Residues 49–56 (GESGSGKS) and 357–364 (GESGSGKS) each bind ATP.

It belongs to the ABC transporter superfamily. Glutathione importer (TC 3.A.1.5.11) family. As to quaternary structure, the complex is composed of two ATP-binding proteins (GsiA), two transmembrane proteins (GsiC and GsiD) and a solute-binding protein (GsiB).

It is found in the cell inner membrane. It catalyses the reaction glutathione(out) + ATP + H2O = glutathione(in) + ADP + phosphate + H(+). Functionally, part of the ABC transporter complex GsiABCD involved in glutathione import. Responsible for energy coupling to the transport system. In Salmonella choleraesuis (strain SC-B67), this protein is Glutathione import ATP-binding protein GsiA.